The sequence spans 143 residues: Nucleoside diphosphate kinase (143 aa).

ATP is bound by residues Lys11, Phe59, Arg87, Thr93, Arg104, and Asn114. His117 serves as the catalytic Pros-phosphohistidine intermediate.

This sequence belongs to the NDK family. In terms of assembly, homotetramer. Mg(2+) is required as a cofactor.

It is found in the cytoplasm. The enzyme catalyses a 2'-deoxyribonucleoside 5'-diphosphate + ATP = a 2'-deoxyribonucleoside 5'-triphosphate + ADP. It carries out the reaction a ribonucleoside 5'-diphosphate + ATP = a ribonucleoside 5'-triphosphate + ADP. Major role in the synthesis of nucleoside triphosphates other than ATP. The ATP gamma phosphate is transferred to the NDP beta phosphate via a ping-pong mechanism, using a phosphorylated active-site intermediate. The sequence is that of Nucleoside diphosphate kinase from Acinetobacter baylyi (strain ATCC 33305 / BD413 / ADP1).